A 396-amino-acid chain; its full sequence is Vitamin K-dependent protein Z (396 aa).

The 46-residue stretch at 1 to 46 (AGSYLLEELFEGHLEKECWEEICVYEEAREVFEDDETTDEFWRTYM) folds into the Gla domain. Glutamate 7, glutamate 8, glutamate 11, glutamate 15, glutamate 17, glutamate 20, glutamate 21, glutamate 26, glutamate 27, glutamate 30, glutamate 33, glutamate 36, and glutamate 40 each carry 4-carboxyglutamate. Cysteine 18 and cysteine 23 are disulfide-bonded. EGF-like domains lie at 47-83 (GGSP…PNCA) and 85-126 (AESE…RSCL). Disulfide bonds link cysteine 51-cysteine 62, cysteine 56-cysteine 71, cysteine 73-cysteine 82, cysteine 89-cysteine 101, cysteine 97-cysteine 110, cysteine 112-cysteine 125, and cysteine 169-cysteine 185. Serine 53 carries O-linked (Glc...) serine glycosylation. N-linked (GlcNAc...) asparagine glycosylation occurs at asparagine 59. (3R)-3-hydroxyaspartate is present on aspartate 64. One can recognise a Peptidase S1 domain in the interval 135 to 357 (TLGPECCQRP…YALWLRQVTQ (223 aa)). 2 N-linked (GlcNAc...) asparagine glycosylation sites follow: asparagine 191 and asparagine 289. A disulfide bridge links cysteine 284 with cysteine 298. The interval 356–396 (TQQPSRASPRGDRGQGRDGEPVPGDRGGRWAPTALPPGPLV) is disordered. Over residues 364-375 (PRGDRGQGRDGE) the composition is skewed to basic and acidic residues. O-linked (GalNAc...) threonine glycosylation is present at threonine 388.

This sequence belongs to the peptidase S1 family. In terms of processing, the iron and 2-oxoglutarate dependent 3-hydroxylation of aspartate and asparagine is (R) stereospecific within EGF domains. As to expression, plasma.

The protein resides in the secreted. Functionally, inhibits activity of the coagulation protease factor Xa in the presence of SERPINA10, calcium and phospholipids. Appears to assist hemostasis by binding thrombin and promoting its association with phospholipid vesicles. This Bos taurus (Bovine) protein is Vitamin K-dependent protein Z (PROZ).